We begin with the raw amino-acid sequence, 159 residues long: ATP synthase subunit b 2 (159 aa).

The chain crosses the membrane as a helical span at residues 1 to 21; sequence MDATFWAFIALVIFVVIVVYM.

It belongs to the ATPase B chain family. As to quaternary structure, F-type ATPases have 2 components, F(1) - the catalytic core - and F(0) - the membrane proton channel. F(1) has five subunits: alpha(3), beta(3), gamma(1), delta(1), epsilon(1). F(0) has three main subunits: a(1), b(2) and c(10-14). The alpha and beta chains form an alternating ring which encloses part of the gamma chain. F(1) is attached to F(0) by a central stalk formed by the gamma and epsilon chains, while a peripheral stalk is formed by the delta and b chains.

Its subcellular location is the cell inner membrane. F(1)F(0) ATP synthase produces ATP from ADP in the presence of a proton or sodium gradient. F-type ATPases consist of two structural domains, F(1) containing the extramembraneous catalytic core and F(0) containing the membrane proton channel, linked together by a central stalk and a peripheral stalk. During catalysis, ATP synthesis in the catalytic domain of F(1) is coupled via a rotary mechanism of the central stalk subunits to proton translocation. Its function is as follows. Component of the F(0) channel, it forms part of the peripheral stalk, linking F(1) to F(0). The protein is ATP synthase subunit b 2 of Brucella canis (strain ATCC 23365 / NCTC 10854 / RM-666).